A 235-amino-acid polypeptide reads, in one-letter code: Urease accessory protein UreF (235 aa).

Belongs to the UreF family. As to quaternary structure, ureD, UreF and UreG form a complex that acts as a GTP-hydrolysis-dependent molecular chaperone, activating the urease apoprotein by helping to assemble the nickel containing metallocenter of UreC. The UreE protein probably delivers the nickel.

It is found in the cytoplasm. Required for maturation of urease via the functional incorporation of the urease nickel metallocenter. The polypeptide is Urease accessory protein UreF (Ureaplasma urealyticum serovar 10 (strain ATCC 33699 / Western)).